The following is a 452-amino-acid chain: NAD kinase 2, mitochondrial (452 aa).

The transit peptide at methionine 1–alanine 50 directs the protein to the mitochondrion. Residues arginine 23–glycine 52 form a disordered region. Lysine 64 is modified (N6-acetyllysine; alternate). N6-succinyllysine; alternate is present on lysine 64. Residue serine 176 is modified to Phosphoserine. Lysine 312 carries the post-translational modification N6-succinyllysine. At lysine 327 the chain carries N6-acetyllysine; alternate. Residue lysine 327 is modified to N6-succinyllysine; alternate. Serine 377 is subject to Phosphoserine. At lysine 407 the chain carries N6-acetyllysine.

It belongs to the NAD kinase family. Homodimer.

The protein localises to the mitochondrion. The catalysed reaction is NAD(+) + ATP = ADP + NADP(+) + H(+). Inhibited by NADH, NADPH and NADP(+). In terms of biological role, mitochondrial NAD(+) kinase that phosphorylates NAD(+) to yield NADP(+). Can use both ATP or inorganic polyphosphate as the phosphoryl donor. This is NAD kinase 2, mitochondrial (Nadk2) from Mus musculus (Mouse).